We begin with the raw amino-acid sequence, 248 residues long: Ubiquinone/menaquinone biosynthesis C-methyltransferase UbiE (248 aa).

S-adenosyl-L-methionine is bound by residues Ser68 and Asp92.

This sequence belongs to the class I-like SAM-binding methyltransferase superfamily. MenG/UbiE family.

The enzyme catalyses a 2-demethylmenaquinol + S-adenosyl-L-methionine = a menaquinol + S-adenosyl-L-homocysteine + H(+). It carries out the reaction a 2-methoxy-6-(all-trans-polyprenyl)benzene-1,4-diol + S-adenosyl-L-methionine = a 5-methoxy-2-methyl-3-(all-trans-polyprenyl)benzene-1,4-diol + S-adenosyl-L-homocysteine + H(+). It functions in the pathway quinol/quinone metabolism; menaquinone biosynthesis; menaquinol from 1,4-dihydroxy-2-naphthoate: step 2/2. Its pathway is cofactor biosynthesis; ubiquinone biosynthesis. Its function is as follows. Methyltransferase required for the conversion of demethylmenaquinol (DMKH2) to menaquinol (MKH2) and the conversion of 2-polyprenyl-6-methoxy-1,4-benzoquinol (DDMQH2) to 2-polyprenyl-3-methyl-6-methoxy-1,4-benzoquinol (DMQH2). The sequence is that of Ubiquinone/menaquinone biosynthesis C-methyltransferase UbiE from Rickettsia bellii (strain RML369-C).